Here is a 502-residue protein sequence, read N- to C-terminus: Pentatricopeptide repeat-containing protein At4g01990, mitochondrial (502 aa).

The transit peptide at 1-13 directs the protein to the mitochondrion; it reads MMHSVSRLARRFC. PPR repeat units follow at residues 139 to 173, 174 to 208, 209 to 243, 245 to 275, 280 to 310, 315 to 345, and 350 to 381; these read NQSTYGSLLNCYCVEKEEVKAKAHFENMVDLNHVS, NSLPFNNLMAMYMGLGQPEKVPALVVAMKEKSITP, CDITYSMWIQSCGSLKDLDGVEKVLDEMKAEGEGI, SWNTFANLAAIYIKVGLYGKAEEALKSLENN, VRDCYHFLINLYTGIANASEVYRVWDLLKKR, NNSSYLTMLRALSKLDDIDGVKKVFAEWEST, and DMRMANVAISSYLKQNMYEEAEAVFNGAMKKC.

Belongs to the PPR family. P subfamily.

The protein localises to the mitochondrion. The polypeptide is Pentatricopeptide repeat-containing protein At4g01990, mitochondrial (Arabidopsis thaliana (Mouse-ear cress)).